The sequence spans 332 residues: Leucine carboxyl methyltransferase 1 (332 aa).

S-adenosyl-L-methionine is bound by residues arginine 71, glycine 96, aspartate 120, aspartate 169–leucine 170, and glutamate 196.

It belongs to the methyltransferase superfamily. LCMT family.

The catalysed reaction is [phosphatase 2A protein]-C-terminal L-leucine + S-adenosyl-L-methionine = [phosphatase 2A protein]-C-terminal L-leucine methyl ester + S-adenosyl-L-homocysteine. In terms of biological role, methylates the carboxyl group of the C-terminal leucine residue of protein phosphatase 2A catalytic subunits to form alpha-leucine ester residues. The sequence is that of Leucine carboxyl methyltransferase 1 (Lcmt1) from Rattus norvegicus (Rat).